We begin with the raw amino-acid sequence, 340 residues long: MADEGGNPRDLPPVGGHAALSRHIGQSLMADEFDMSFFRDKPLDHGFFSPMSALLPCDESWPVQIVPLQVGVLQLPIPTARRCYKLGQALRRAIESYPEDLKVAIVATGGVSHQVHGERCGFNNPEWDAQFLDLLVNDPQRLTEMTLAEYATLGGMEGAEVITWLIMRGTLSANVERKHQSYYLPSMTGIATLLLENRDQALPAPVNERHRQHMQHQLAGAEQLEGTYPYTLERSAKGYRLNKFLHRMIEPQWRQRFLSEPEALYREAGLSEEESDLLRRRDWRGLIHYGVIFFVLEKLGAVLGVSNLDIYAAMRGQSIEDFMKTRNQQVRYSVAGKAPN.

Histidine 45 serves as the catalytic Proton donor. Histidine 113 functions as the Proton acceptor in the catalytic mechanism.

Belongs to the LigB/MhpB extradiol dioxygenase family. Fe(2+) is required as a cofactor.

The enzyme catalyses 3,4,5-trihydroxybenzoate + O2 = (1E)-4-oxobut-1-ene-1,2,4-tricarboxylate + 2 H(+). Functionally, ring-cleavage dioxygenase that acts specifically on gallate to produce the keto-tautomer of 4-oxalomesaconate. Mediates the first step of gallate degradation pathway. This Pseudomonas putida (strain ATCC 47054 / DSM 6125 / CFBP 8728 / NCIMB 11950 / KT2440) protein is Gallate dioxygenase (galA).